We begin with the raw amino-acid sequence, 345 residues long: Probable deoxyhypusine synthase 2 (345 aa).

Catalysis depends on lysine 292, which acts as the Nucleophile.

It belongs to the deoxyhypusine synthase family. NAD(+) serves as cofactor.

It catalyses the reaction [eIF5A protein]-L-lysine + spermidine = [eIF5A protein]-deoxyhypusine + propane-1,3-diamine. It functions in the pathway protein modification; eIF5A hypusination. Functionally, catalyzes the NAD-dependent oxidative cleavage of spermidine and the subsequent transfer of the butylamine moiety of spermidine to the epsilon-amino group of a specific lysine residue of the eIF-5A precursor protein to form the intermediate deoxyhypusine residue. This is Probable deoxyhypusine synthase 2 (dys2) from Methanosarcina mazei (strain ATCC BAA-159 / DSM 3647 / Goe1 / Go1 / JCM 11833 / OCM 88) (Methanosarcina frisia).